The chain runs to 64 residues: Large ribosomal subunit protein bL35 (64 aa).

Belongs to the bacterial ribosomal protein bL35 family.

The chain is Large ribosomal subunit protein bL35 from Vibrio vulnificus (strain CMCP6).